The following is a 536-amino-acid chain: Keratin, type II cytoskeletal 4 (536 aa).

The tract at residues 1–145 (MISRQSSVRG…DPEIQKIRTA (145 aa)) is head. Arg-13 bears the Omega-N-methylarginine mark. The coil 1A stretch occupies residues 146–181 (EREQIKTLNNKFASFIDKVRFLEQQNKVLETKWNLL). The IF rod domain maps to 146-457 (EREQIKTLNN…KLLEGEECRM (312 aa)). Positions 182–200 (QQQTTTTSPRNLDPFFETY) are linker 1. The tract at residues 201-293 (INALRKNLDT…LYEAELSQMQ (93 aa)) is coil 1B. The tract at residues 294–316 (THVSDTSVVLSMDNNRNLDLDGI) is linker 12. The segment at 317 to 454 (IAEVRAQYEE…TYRKLLEGEE (138 aa)) is coil 2. The tract at residues 455–524 (CRMSGECKSA…TSSATITKRS (70 aa)) is tail. The disordered stretch occupies residues 515 to 536 (TSSATITKRSPRTRQDPDGLQP). Residues 527–536 (TRQDPDGLQP) are compositionally biased toward basic and acidic residues.

Belongs to the intermediate filament family. As to quaternary structure, heterotetramer of two type I and two type II keratins. keratin-4 is generally associated with keratin-13.

This is Keratin, type II cytoskeletal 4 from Rattus norvegicus (Rat).